Consider the following 235-residue polypeptide: Small ribosomal subunit protein eS4 (235 aa).

The region spanning 37-100 (LPLGIIIRDI…NEAYRMLQDE (64 aa)) is the S4 RNA-binding domain.

It belongs to the eukaryotic ribosomal protein eS4 family.

The polypeptide is Small ribosomal subunit protein eS4 (Methanosarcina acetivorans (strain ATCC 35395 / DSM 2834 / JCM 12185 / C2A)).